Reading from the N-terminus, the 309-residue chain is uncharacterized protein (309 aa).

The RPE1 insert domain occupies 9–55 (NFLYNIANKDGFKGYKECRTSAYKNVFDDSSTKSTSKFHLGISDTKN). A helical membrane pass occupies residues 62–82 (IIGLILIIFAGVLFYAYILQH).

The protein belongs to the LicD transferase family.

It is found in the membrane. This is an uncharacterized protein from Rickettsia typhi (strain ATCC VR-144 / Wilmington).